Reading from the N-terminus, the 365-residue chain is Histidinol-phosphate aminotransferase 2 (365 aa).

An N6-(pyridoxal phosphate)lysine modification is found at Lys222.

Belongs to the class-II pyridoxal-phosphate-dependent aminotransferase family. Histidinol-phosphate aminotransferase subfamily. Homodimer. The cofactor is pyridoxal 5'-phosphate.

The enzyme catalyses L-histidinol phosphate + 2-oxoglutarate = 3-(imidazol-4-yl)-2-oxopropyl phosphate + L-glutamate. The protein operates within amino-acid biosynthesis; L-histidine biosynthesis; L-histidine from 5-phospho-alpha-D-ribose 1-diphosphate: step 7/9. The sequence is that of Histidinol-phosphate aminotransferase 2 (hisC2) from Bordetella parapertussis (strain 12822 / ATCC BAA-587 / NCTC 13253).